The chain runs to 669 residues: DNA mismatch repair protein MutL (669 aa).

The segment at 361–409 is disordered; sequence ENVFSQPYQAPVTSSTQKKSTGAYQGSAGKGLTDTQKSPQKTLDTRQFG. Polar residues-rich tracts occupy residues 363-384 and 393-402; these read VFSQPYQAPVTSSTQKKSTGAY and TDTQKSPQKT.

It belongs to the DNA mismatch repair MutL/HexB family.

This protein is involved in the repair of mismatches in DNA. It is required for dam-dependent methyl-directed DNA mismatch repair. May act as a 'molecular matchmaker', a protein that promotes the formation of a stable complex between two or more DNA-binding proteins in an ATP-dependent manner without itself being part of a final effector complex. The polypeptide is DNA mismatch repair protein MutL (Proteus mirabilis (strain HI4320)).